The primary structure comprises 434 residues: Glutamyl-tRNA reductase (434 aa).

Residues 49–52, S114, 119–121, and Q125 contribute to the substrate site; these read TCNR and EPQ. C50 functions as the Nucleophile in the catalytic mechanism. 199 to 204 provides a ligand contact to NADP(+); it reads GAGETI.

Belongs to the glutamyl-tRNA reductase family. Homodimer.

The catalysed reaction is (S)-4-amino-5-oxopentanoate + tRNA(Glu) + NADP(+) = L-glutamyl-tRNA(Glu) + NADPH + H(+). It functions in the pathway porphyrin-containing compound metabolism; protoporphyrin-IX biosynthesis; 5-aminolevulinate from L-glutamyl-tRNA(Glu): step 1/2. In terms of biological role, catalyzes the NADPH-dependent reduction of glutamyl-tRNA(Glu) to glutamate 1-semialdehyde (GSA). This chain is Glutamyl-tRNA reductase, found in Pasteurella multocida (strain Pm70).